The following is a 114-amino-acid chain: MTISMLQSKIHRATVTDANLNYVGSITIDEELIKKAGMLEFQKVDILDINNGERFSTYIIKGKKGEICLNGAAARKVCIGDLVIIVSYAQMSTDEALNFKPKIVHVNSKNEALE.

The active-site Schiff-base intermediate with substrate; via pyruvic acid is the Ser25. At Ser25 the chain carries Pyruvic acid (Ser). Thr57 contacts substrate. Tyr58 functions as the Proton donor in the catalytic mechanism. Residue 71 to 73 participates in substrate binding; the sequence is GAA.

It belongs to the PanD family. As to quaternary structure, heterooctamer of four alpha and four beta subunits. Pyruvate is required as a cofactor. Is synthesized initially as an inactive proenzyme, which is activated by self-cleavage at a specific serine bond to produce a beta-subunit with a hydroxyl group at its C-terminus and an alpha-subunit with a pyruvoyl group at its N-terminus.

The protein resides in the cytoplasm. The enzyme catalyses L-aspartate + H(+) = beta-alanine + CO2. The protein operates within cofactor biosynthesis; (R)-pantothenate biosynthesis; beta-alanine from L-aspartate: step 1/1. Its function is as follows. Catalyzes the pyruvoyl-dependent decarboxylation of aspartate to produce beta-alanine. The polypeptide is Aspartate 1-decarboxylase (Campylobacter hominis (strain ATCC BAA-381 / DSM 21671 / CCUG 45161 / LMG 19568 / NCTC 13146 / CH001A)).